A 129-amino-acid chain; its full sequence is Small ribosomal subunit protein uS8 (129 aa).

Belongs to the universal ribosomal protein uS8 family. As to quaternary structure, part of the 30S ribosomal subunit. Contacts proteins S5 and S12.

In terms of biological role, one of the primary rRNA binding proteins, it binds directly to 16S rRNA central domain where it helps coordinate assembly of the platform of the 30S subunit. The sequence is that of Small ribosomal subunit protein uS8 from Legionella pneumophila (strain Corby).